The following is a 265-amino-acid chain: Methylthioribulose-1-phosphate dehydratase (265 aa).

Residue Cys118 coordinates substrate. Positions 136 and 138 each coordinate Zn(2+). The active-site Proton donor/acceptor is Glu161. His226 serves as a coordination point for Zn(2+).

The protein belongs to the aldolase class II family. MtnB subfamily. It depends on Zn(2+) as a cofactor.

The protein localises to the cytoplasm. The catalysed reaction is 5-(methylsulfanyl)-D-ribulose 1-phosphate = 5-methylsulfanyl-2,3-dioxopentyl phosphate + H2O. Its pathway is amino-acid biosynthesis; L-methionine biosynthesis via salvage pathway; L-methionine from S-methyl-5-thio-alpha-D-ribose 1-phosphate: step 2/6. Catalyzes the dehydration of methylthioribulose-1-phosphate (MTRu-1-P) into 2,3-diketo-5-methylthiopentyl-1-phosphate (DK-MTP-1-P). In Scheffersomyces stipitis (strain ATCC 58785 / CBS 6054 / NBRC 10063 / NRRL Y-11545) (Yeast), this protein is Methylthioribulose-1-phosphate dehydratase.